A 344-amino-acid polypeptide reads, in one-letter code: Glycerol-3-phosphate dehydrogenase [NAD(P)+] 2 (344 aa).

Residues S12, W13, R33, R34, and K107 each coordinate NADPH. Residues K107, G138, and S140 each contribute to the sn-glycerol 3-phosphate site. Residue A142 participates in NADPH binding. Sn-glycerol 3-phosphate-binding residues include K193, D246, S256, R257, and N258. K193 serves as the catalytic Proton acceptor. R257 contributes to the NADPH binding site. NADPH contacts are provided by V281 and E283.

The protein belongs to the NAD-dependent glycerol-3-phosphate dehydrogenase family.

It localises to the cytoplasm. It catalyses the reaction sn-glycerol 3-phosphate + NAD(+) = dihydroxyacetone phosphate + NADH + H(+). The enzyme catalyses sn-glycerol 3-phosphate + NADP(+) = dihydroxyacetone phosphate + NADPH + H(+). Its pathway is membrane lipid metabolism; glycerophospholipid metabolism. Its function is as follows. Catalyzes the reduction of the glycolytic intermediate dihydroxyacetone phosphate (DHAP) to sn-glycerol 3-phosphate (G3P), the key precursor for phospholipid synthesis. The polypeptide is Glycerol-3-phosphate dehydrogenase [NAD(P)+] 2 (Salinibacter ruber (strain DSM 13855 / M31)).